We begin with the raw amino-acid sequence, 148 residues long: Phosphopantetheine adenylyltransferase (148 aa).

The protein belongs to the eukaryotic CoaD family.

Its subcellular location is the cytoplasm. The catalysed reaction is (R)-4'-phosphopantetheine + ATP + H(+) = 3'-dephospho-CoA + diphosphate. It functions in the pathway cofactor biosynthesis; coenzyme A biosynthesis. Reversibly transfers an adenylyl group from ATP to 4'-phosphopantetheine, yielding dephospho-CoA (dPCoA) and pyrophosphate. The sequence is that of Phosphopantetheine adenylyltransferase from Archaeoglobus fulgidus (strain ATCC 49558 / DSM 4304 / JCM 9628 / NBRC 100126 / VC-16).